The following is a 165-amino-acid chain: Endoribonuclease YbeY (165 aa).

Zn(2+)-binding residues include His-131, His-135, and His-141.

The protein belongs to the endoribonuclease YbeY family. Zn(2+) serves as cofactor.

It is found in the cytoplasm. In terms of biological role, single strand-specific metallo-endoribonuclease involved in late-stage 70S ribosome quality control and in maturation of the 3' terminus of the 16S rRNA. In Agathobacter rectalis (strain ATCC 33656 / DSM 3377 / JCM 17463 / KCTC 5835 / VPI 0990) (Eubacterium rectale), this protein is Endoribonuclease YbeY.